A 24-amino-acid chain; its full sequence is Snake venom metalloproteinase Batx-1 (24 aa).

One can recognise a Peptidase M12B domain in the interval 1-24 (YIELAVVADHGIFTKYNSNLNTIR). E3 is a binding site for Ca(2+).

The protein belongs to the venom metalloproteinase (M12B) family. P-I subfamily. As to quaternary structure, monomer. Zn(2+) serves as cofactor. Post-translationally, the N-terminus is blocked. In terms of processing, contains 3 disulfide bonds. As to expression, expressed by the venom gland.

The protein resides in the secreted. Its activity is regulated as follows. Inhibited by EDTA, and o-phenanthroline, but not inhibited by PMSF, pepstatin A, and aprotinin. Functionally, zinc metalloproteinase that exhits a weak hemorrhagic activity. Degrades preferentially the Aalpha- (FGA) and Bbeta-chains (FGB) of fibrinogen, and partially degrades gamma-chain (FGG) at higher concentration. Induces a mild myotoxicity, but lacks coagulant activity on human plasma or bovin fibrinogen and defibrinating activity. In Bothrops atrox (Barba amarilla), this protein is Snake venom metalloproteinase Batx-1.